Reading from the N-terminus, the 599-residue chain is MLANETNKLLLSSQQEKPNHYTYLKEFRVEQCQSFLQHKCNQHRPFVCFNWHFQNQRRRRPVRKRDGTFNYSADNYCTKYDETTGICPEGDECPYLHRTAGDTERRYHLRYYKTCMCVHDTDSRGYCVKNGLHCAFAHGMQDQRPPVYDIKELETLQNAESTLDSTNALNALDKERNLMNEDPKWQDTNYVLANYKTEPCKRPPRLCRQGYACPQYHNSKDKRRSPRKYKYRSTPCPNVKHGEEWGEPGNCEAGDNCQYCHTRTEQQFHPEIYKSTKCNDVQQAGYCPRSVFCAFAHVEPCSMDDPRENSLSASLANTSLLTRSSAPINIPNTTLSNSINDFNSGSFAVNIPSSSLTYSPTNHANLFNVDAFNYGGSNKLSNSLSATQNDSSLFFPSRIISPGFGDGLSISPSVRISELNTIRDDINSSSVGNSLFENTLNTAKNAFSLQSLQSQNNSDLGRITNELLTKNAQIHKLNGRFEDMACKLKIAELHRDKAKQEAQEWKERYDLAQIQLNLPAELRDLSIQKLKQLQSKLRTDLEEVDKVLYLENAKKCMKCEENNRTVTLEPCNHLSICNTCAESVTECPYCQVPVITTHT.

5 C3H1-type zinc fingers span residues 71 to 100 (YSADNYCTKYDETTGICPEGDECPYLHRTA), 111 to 141 (YYKTCMCVHDTDSRGYCVKNGLHCAFAHGMQ), 194 to 220 (NYKTEPCKRPPRLCRQGYACPQYHNSK), 230 to 264 (KYRSTPCPNVKHGEEWGEPGNCEAGDNCQYCHTRT), and 272 to 300 (IYKSTKCNDVQQAGYCPRSVFCAFAHVEP). At Ser-411 the chain carries Phosphoserine. The RING-type zinc finger occupies 556-591 (CMKCEENNRTVTLEPCNHLSICNTCAESVTECPYCQ).

It belongs to the unkempt family. In terms of tissue distribution, ubiquitous in most somatic tissues from syncytial embryo through to embryo stage 15. Expression becomes restricted predominantly to the CNS at stages 16 and 17.

Its subcellular location is the cytoplasm. In terms of biological role, essential for late larval/early pupal development. The protein is RING finger protein unkempt (unk) of Drosophila melanogaster (Fruit fly).